The chain runs to 545 residues: Chaperonin GroEL (545 aa).

ATP is bound by residues 30–33 (TLGP), Lys-51, 87–91 (DGTTT), Gly-415, and Asp-496.

The protein belongs to the chaperonin (HSP60) family. In terms of assembly, forms a cylinder of 14 subunits composed of two heptameric rings stacked back-to-back. Interacts with the co-chaperonin GroES.

The protein resides in the cytoplasm. The catalysed reaction is ATP + H2O + a folded polypeptide = ADP + phosphate + an unfolded polypeptide.. Its function is as follows. Together with its co-chaperonin GroES, plays an essential role in assisting protein folding. The GroEL-GroES system forms a nano-cage that allows encapsulation of the non-native substrate proteins and provides a physical environment optimized to promote and accelerate protein folding. The polypeptide is Chaperonin GroEL (Chlorobaculum tepidum (strain ATCC 49652 / DSM 12025 / NBRC 103806 / TLS) (Chlorobium tepidum)).